A 691-amino-acid polypeptide reads, in one-letter code: Solute carrier organic anion transporter family member 1B1 (691 aa).

Residues 1–28 (MDQNQHLNKTAEAQPSENKKTRYCNGLK) lie on the Cytoplasmic side of the membrane. The chain crosses the membrane as a helical span at residues 29-48 (MFLAALSLSFIAKTLGAIIM). The Extracellular portion of the chain corresponds to 49–67 (KSSIIHIERRFEISSSLVG). The chain crosses the membrane as a helical span at residues 68–88 (FIDGSFEIGNLLVIVFVSYFG). Residues 89–94 (SKLHRP) are Cytoplasmic-facing. A helical transmembrane segment spans residues 95-119 (KLIGIGCFIMGIGGVLTALPHFFMG). Residues 120 to 168 (YYRYSKETNINSSENSTSTLSTCLINQILSLNRASPEIVGKGCLKESGS) are Extracellular-facing. N-linked (GlcNAc...) asparagine glycans are attached at residues Asn-130 and Asn-134. Residues 169 to 197 (YMWIYVFMGNMLRGIGETPIVPLGLSYID) form a helical membrane-spanning segment. Over 198–216 (DFAKEGHSSLYLGILNAIA) the chain is Cytoplasmic. The chain crosses the membrane as a helical span at residues 217 to 237 (MIGPIIGFTLGSLFSKMYVDI). Residues 238-255 (GYVDLSTIRITPTDSRWV) lie on the Extracellular side of the membrane. The chain crosses the membrane as a helical span at residues 256–280 (GAWWLNFLVSGLFSIISSIPFFFLP). Residues 281-331 (QTPNKPQKERKASLSLHVLETNDEKDQTANLTNQGKNITKNVTGFFQSFKS) lie on the Cytoplasmic side of the membrane. Phosphoserine is present on residues Ser-293 and Ser-295. A helical transmembrane segment spans residues 332-353 (ILTNPLYVMFVLLTLLQVSSYI). Residues 354–373 (GAFTYVFKYVEQQYGQPSSK) lie on the Extracellular side of the membrane. Residues 374–397 (ANILLGVITIPIFASGMFLGGYII) traverse the membrane as a helical segment. Residues 398–401 (KKFK) lie on the Cytoplasmic side of the membrane. A helical membrane pass occupies residues 402-425 (LNTVGIAKFSCFTAVMSLSFYLLY). At 426–537 (FFILCENKSV…DACTRKFYFF (112 aa)) the chain is on the extracellular side. N-linked (GlcNAc...) asparagine glycosylation is present at Asn-432. The Kazal-like domain maps to 453-508 (DVPLSYCNSDCNCDESQWEPVCGNNGITYISPCLAGCKSSSGNKKPIVFYNCSCLE). 3 cysteine pairs are disulfide-bonded: Cys-459–Cys-489, Cys-465–Cys-485, and Cys-474–Cys-506. Residues Asn-503 and Asn-516 are each glycosylated (N-linked (GlcNAc...) asparagine). Residues 538-560 (VAIQVLNLFFSALGGTSHVMLIV) traverse the membrane as a helical segment. Residues 561 to 569 (KIVQPELKS) are Cytoplasmic-facing. A helical membrane pass occupies residues 570–595 (LALGFHSMVIRALGGILAPIYFGALI). Residues 596-629 (DTTCIKWSTNNCGTRGSCRTYNSTSFSRVYLGLS) are Extracellular-facing. Asn-617 carries an N-linked (GlcNAc...) asparagine glycan. A helical membrane pass occupies residues 630 to 647 (SMLRVSSLVLYIILIYAM). Over 648 to 691 (KKKYQEKDINASENGSVMDEANLESLNKNKHFVPSAGADSETHC) the chain is Cytoplasmic. Phosphoserine occurs at positions 672 and 682.

Belongs to the organo anion transporter (TC 2.A.60) family. Highly expressed in liver, at the basolateral membranes of centrilobular hepatocytes. Expressed in liver (at protein level). Expressed in fetal liver. Not detected in heart, brain, placenta, lung, skeletal muscle, kidney, pancreas, spleen, thymus, prostate, testis, ovary, small intestine, colon and leukocyte. In testis, primarily localized to the basal membrane of Sertoli cells and weakly expressed in Leydig cells and within the tubules.

The protein resides in the basolateral cell membrane. Its subcellular location is the basal cell membrane. It catalyses the reaction taurocholate(out) = taurocholate(in). It carries out the reaction dehydroepiandrosterone 3-sulfate(out) = dehydroepiandrosterone 3-sulfate(in). The catalysed reaction is estrone 3-sulfate(out) = estrone 3-sulfate(in). The enzyme catalyses 3,3',5'-triiodo-L-thyronine(out) = 3,3',5'-triiodo-L-thyronine(in). It catalyses the reaction L-thyroxine(out) = L-thyroxine(in). It carries out the reaction prostaglandin E2(out) = prostaglandin E2(in). The catalysed reaction is thromboxane B2(out) = thromboxane B2(in). The enzyme catalyses 17beta-estradiol 17-O-(beta-D-glucuronate)(out) = 17beta-estradiol 17-O-(beta-D-glucuronate)(in). It catalyses the reaction leukotriene C4(out) = leukotriene C4(in). It carries out the reaction leukotriene E4(out) = leukotriene E4(in). The catalysed reaction is (4E,15E)-bilirubin IXalpha C8-beta-D-glucuronoside(out) = (4E,15E)-bilirubin IXalpha C8-beta-D-glucuronoside(in). The enzyme catalyses bilirubin IXalpha bis-beta-D-glucuronoside(out) = bilirubin IXalpha bis-beta-D-glucuronoside(in). In terms of biological role, mediates the Na(+)-independent uptake of organic anions. Shows broad substrate specificity, can transport both organic anions such as bile acid taurocholate (cholyltaurine) and conjugated steroids (dehydroepiandrosterone 3-sulfate, 17-beta-glucuronosyl estradiol, and estrone 3-sulfate), as well as eicosanoids (prostaglandin E2, thromboxane B2, leukotriene C4, and leukotriene E4), and thyroid hormones (T4/L-thyroxine, and T3/3,3',5'-triiodo-L-thyronine). Can take up bilirubin glucuronides from plasma into the liver, contributing to the detoxification-enhancing liver-blood shuttling loop. Involved in the clearance of endogenous and exogenous substrates from the liver. Transports coproporphyrin I and III, by-products of heme synthesis, and may be involved in their hepatic disposition. May contribute to regulate the transport of organic compounds in testes across the blood-testis-barrier. Can transport HMG-CoA reductase inhibitors (also known as statins), such as pravastatin and pitavastatin, a clinically important class of hypolipidemic drugs. May play an important role in plasma and tissue distribution of the structurally diverse chemotherapeutic drug methotrexate. May also transport antihypertension agents, such as the angiotensin-converting enzyme (ACE) inhibitor prodrug enalapril, and the highly selective angiotensin II AT1-receptor antagonist valsartan, in the liver. Shows a pH-sensitive substrate specificity towards prostaglandin E2 and T4 which may be ascribed to the protonation state of the binding site and leads to a stimulation of substrate transport in an acidic microenvironment. Hydrogencarbonate/HCO3(-) acts as the probable counteranion that exchanges for organic anions. The protein is Solute carrier organic anion transporter family member 1B1 (SLCO1B1) of Homo sapiens (Human).